A 325-amino-acid chain; its full sequence is L-lactate dehydrogenase (325 aa).

Residues valine 19, aspartate 40, lysine 45, tyrosine 70, and 84–85 (GA) contribute to the NAD(+) site. 2 residues coordinate substrate: glutamine 87 and arginine 93. NAD(+) is bound by residues threonine 106, 123–125 (AAN), and serine 148. 125–128 (NPVD) is a binding site for substrate. Residue 153–156 (DSAR) coordinates substrate. Positions 158 and 173 each coordinate beta-D-fructose 1,6-bisphosphate. The Proton acceptor role is filled by histidine 180. Position 225 is a phosphotyrosine (tyrosine 225). Threonine 234 is a substrate binding site.

It belongs to the LDH/MDH superfamily. LDH family. As to quaternary structure, homotetramer.

The protein resides in the cytoplasm. It catalyses the reaction (S)-lactate + NAD(+) = pyruvate + NADH + H(+). The protein operates within fermentation; pyruvate fermentation to lactate; (S)-lactate from pyruvate: step 1/1. Its activity is regulated as follows. Allosterically activated by fructose 1,6-bisphosphate (FBP). Functionally, catalyzes the conversion of lactate to pyruvate. This is L-lactate dehydrogenase from Latilactobacillus sakei subsp. sakei (strain 23K) (Lactobacillus sakei subsp. sakei).